A 703-amino-acid polypeptide reads, in one-letter code: Phenylalanine aminomutase (L-beta-phenylalanine forming) (703 aa).

The active-site Proton donor/acceptor is the Y79. Residues 177–179 (ASG) constitute a cross-link (5-imidazolinone (Ala-Gly)). Residue S178 is modified to 2,3-didehydroalanine (Ser).

The protein belongs to the PAL/histidase family. Post-translationally, contains an active site 4-methylidene-imidazol-5-one (MIO), which is formed autocatalytically by cyclization and dehydration of residues Ala-Ser-Gly.

It carries out the reaction L-phenylalanine = L-beta-phenylalanine. Its pathway is mycotoxin biosynthesis. Phenylalanine aminomutase; part of the gene cluster that mediates the biosynthesis of the mycotoxin cyclochlorotine, a hepatotoxic and carcinogenic cyclic chlorinated pentapeptide. Within the pathway, cctP1 provides the uncommon building block beta-Phe from Phe. The NRPS cctN initially catalyzes the condensation of L-serine (Ser), Pro, L-2-aminobutyrate (2Abu), Ser, and beta-Phe in this order to produce isocyclotine. After the dichlorination of Pro2 catalyzed by cctP2 to produce isocyclochlorotine, the cctO-mediated transacylation of isocyclochlorotine can furnish cyclochlorotine. The subsequent hydroxylation of cyclochlorotine by cctR yields hydroxycyclochlorotine as the final product. CctP1 probably acts as a phenylalanine aminomutase and provides the uncommon building block beta-Phe. Furthermore, 2Abu can be synthesized from threonine by one of the threonine dehydratases and transaminases localized outside of the cluster. The functions of the remaining proteins encoded by the cluster, cctM and cctT, have not been identified yet. This Talaromyces islandicus (Penicillium islandicum) protein is Phenylalanine aminomutase (L-beta-phenylalanine forming).